The chain runs to 149 residues: D-aminoacyl-tRNA deacylase (149 aa).

The short motif at 137 to 138 is the Gly-cisPro motif, important for rejection of L-amino acids element; it reads GP.

The protein belongs to the DTD family. Homodimer.

It localises to the cytoplasm. The catalysed reaction is glycyl-tRNA(Ala) + H2O = tRNA(Ala) + glycine + H(+). The enzyme catalyses a D-aminoacyl-tRNA + H2O = a tRNA + a D-alpha-amino acid + H(+). Its function is as follows. An aminoacyl-tRNA editing enzyme that deacylates mischarged D-aminoacyl-tRNAs. Also deacylates mischarged glycyl-tRNA(Ala), protecting cells against glycine mischarging by AlaRS. Acts via tRNA-based rather than protein-based catalysis; rejects L-amino acids rather than detecting D-amino acids in the active site. By recycling D-aminoacyl-tRNA to D-amino acids and free tRNA molecules, this enzyme counteracts the toxicity associated with the formation of D-aminoacyl-tRNA entities in vivo and helps enforce protein L-homochirality. The protein is D-aminoacyl-tRNA deacylase of Janthinobacterium sp. (strain Marseille) (Minibacterium massiliensis).